The sequence spans 129 residues: Small ribosomal subunit protein uS11 (129 aa).

It belongs to the universal ribosomal protein uS11 family. Part of the 30S ribosomal subunit. Interacts with proteins S7 and S18. Binds to IF-3.

Its function is as follows. Located on the platform of the 30S subunit, it bridges several disparate RNA helices of the 16S rRNA. Forms part of the Shine-Dalgarno cleft in the 70S ribosome. The polypeptide is Small ribosomal subunit protein uS11 (Staphylococcus haemolyticus (strain JCSC1435)).